Consider the following 356-residue polypeptide: Ribosomal RNA large subunit methyltransferase M (356 aa).

Residues serine 187, cysteine 220 to glycine 223, aspartate 239, aspartate 259, and aspartate 276 contribute to the S-adenosyl-L-methionine site. Lysine 305 (proton acceptor) is an active-site residue.

This sequence belongs to the class I-like SAM-binding methyltransferase superfamily. RNA methyltransferase RlmE family. RlmM subfamily. In terms of assembly, monomer.

It localises to the cytoplasm. The catalysed reaction is cytidine(2498) in 23S rRNA + S-adenosyl-L-methionine = 2'-O-methylcytidine(2498) in 23S rRNA + S-adenosyl-L-homocysteine + H(+). Catalyzes the 2'-O-methylation at nucleotide C2498 in 23S rRNA. The chain is Ribosomal RNA large subunit methyltransferase M from Pseudoalteromonas atlantica (strain T6c / ATCC BAA-1087).